The following is a 335-amino-acid chain: Glucose-dependent insulinotropic receptor (335 aa).

Topologically, residues 1 to 12 (MESSFSFGVILA) are extracellular. The chain crosses the membrane as a helical span at residues 13 to 33 (VLASLIIATNTLVAVAVLLLI). The Cytoplasmic portion of the chain corresponds to 34–37 (HKND). A helical transmembrane segment spans residues 38 to 58 (GVSLCFTLNLAVADTLIGVAI). Topologically, residues 59–81 (SGLLTDQLSSPSRPTQKTLCSLR) are extracellular. The helical transmembrane segment at 82 to 102 (MAFVTSSAAASVLTVMLITFD) threads the bilayer. Over 103–125 (RYLAIKQPFRYLKIMSGFVAGAC) the chain is Cytoplasmic. A helical membrane pass occupies residues 126–146 (IAGLWLVSYLIGFLPLGIPMF). The Extracellular segment spans residues 147–164 (QQTAYKGQCSFFAVFHPH). A helical transmembrane segment spans residues 165-185 (FVLTLSCVGFFPAMLLFVFFY). Residues 186–226 (CDMLKIASMHSQQIRKMEHAGAMAGGYRSPRTPSDFKALRT) lie on the Cytoplasmic side of the membrane. Residues 227 to 247 (VSVLIGSFALSWTPFLITGIV) traverse the membrane as a helical segment. The Extracellular portion of the chain corresponds to 248 to 262 (QVACQECHLYLVLER). The chain crosses the membrane as a helical span at residues 263–283 (YLWLLGVGNSLLNPLIYAYWQ). Topologically, residues 284–335 (KEVRLQLYHMALGVKKVLTSFLLFLSARNCGPERPRESSCHIVTISSSEFDG) are cytoplasmic.

The protein belongs to the G-protein coupled receptor 1 family. In terms of tissue distribution, predominantly expressed in the pancreas, especially in the islets.

The protein localises to the cell membrane. In terms of biological role, receptor for the endogenous fatty-acid ethanolamide oleoylethanolamide (OEA) and lysophosphatidylcholine (LPC). Functions as a glucose-dependent insulinotropic receptor. The activity of this receptor is mediated by G proteins which activate adenylate cyclase. Seems to act through a G(s) mediated pathway. The chain is Glucose-dependent insulinotropic receptor (GPR119) from Homo sapiens (Human).